A 345-amino-acid chain; its full sequence is S-adenosylmethionine:tRNA ribosyltransferase-isomerase (345 aa).

The protein belongs to the QueA family. Monomer.

The protein resides in the cytoplasm. The catalysed reaction is 7-aminomethyl-7-carbaguanosine(34) in tRNA + S-adenosyl-L-methionine = epoxyqueuosine(34) in tRNA + adenine + L-methionine + 2 H(+). It functions in the pathway tRNA modification; tRNA-queuosine biosynthesis. Transfers and isomerizes the ribose moiety from AdoMet to the 7-aminomethyl group of 7-deazaguanine (preQ1-tRNA) to give epoxyqueuosine (oQ-tRNA). This chain is S-adenosylmethionine:tRNA ribosyltransferase-isomerase, found in Finegoldia magna (strain ATCC 29328 / DSM 20472 / WAL 2508) (Peptostreptococcus magnus).